We begin with the raw amino-acid sequence, 718 residues long: MRNLQPDSVENSLSQLPSRCLETRKRKRSYKKRPVTYSYWRRTQRNRARKHKAPVKGLVSFEDVSVDFTWDEWQDLDDSQRKLYRDVMLETYSSLESLGHCITKPEVIFKLEQGAEPWRAEDVPKQSRADVQKITELNETSQDNEERHLWHHAITYSNKSTEEKVKLGNIVNVSSNCVSNLTVKNGNSSGMRPVALTVWQSVLPPNKPDDTRIGEELDASLTSEPPIHAEHPGLYSRAPGTGQQFQCCMQEVTCNTKALWTKRFHIAHGSSKFGESEKVPDEVALHAQDVSWVRAETFECSICKKTFCTKCELMKHKKIHKGQQYYTCRDCEKTFIKESYHTDQRVHAGVGSHRCKQCEKCFHQKNQQNVHERVPREARLWEVYQSENSFGEKPNLRRYQRTRAGYKPYGCNLCGKAFYRKSHLGRHQKIHTGEKPYGCEECKKTFYHKSSLTIHQRTHTGEKPYECKKCRKTFYCKSDLNVHHRTHTGEKPYECDECRKTFYSKSHLVIHQKVHTGDKPYECEECQKAFSRKSNLTVHQKTHTGEKPYECNVCGKTFHRQSHLNMHQGTHTGQKPYQCEECGKAFYQKSSLRRHQRNHTGSRPYACEECRKTFLHKSSLTVHQRSHTGYKPYSCEECRKTFYSKSHLTVHQRTHTGEKPYECKLCKKAFHQKSYLNRHQVTHGSEKRFECQECRKTFYHKSSLTVHQRIHLRELLCV.

A KRAB domain is found at 59–130 (VSFEDVSVDF…EDVPKQSRAD (72 aa)). The C2H2-type 1 zinc finger occupies 298 to 320 (FECSICKKTFCTKCELMKHKKIH). A C2H2-type 2; degenerate zinc finger spans residues 353–375 (HRCKQCEKCFHQKNQQNVHERVP). 11 consecutive C2H2-type zinc fingers follow at residues 409 to 431 (YGCNLCGKAFYRKSHLGRHQKIH), 437 to 459 (YGCEECKKTFYHKSSLTIHQRTH), 465 to 487 (YECKKCRKTFYCKSDLNVHHRTH), 493 to 515 (YECDECRKTFYSKSHLVIHQKVH), 521 to 543 (YECEECQKAFSRKSNLTVHQKTH), 549 to 571 (YECNVCGKTFHRQSHLNMHQGTH), 577 to 599 (YQCEECGKAFYQKSSLRRHQRNH), 605 to 627 (YACEECRKTFLHKSSLTVHQRSH), 633 to 655 (YSCEECRKTFYSKSHLTVHQRTH), 661 to 683 (YECKLCKKAFHQKSYLNRHQVTH), and 689 to 711 (FECQECRKTFYHKSSLTVHQRIH).

As to expression, predominantly in the spermatocytes and spermatids of testes.

The protein resides in the nucleus. A putative DNA-binding regulatory protein associated with meiosis in spermatogenesis. This Mus musculus (Mouse) protein is Zinc finger protein 39 (Zfp39).